The following is a 536-amino-acid chain: MTLDISREEFVEHAKADRPVVVRTAAELDVDVEPLTAYAALTGRTSDVAANDYTFLLESAEKVASSDPDGAFAPETDDRHARFSFVGYDPRAVVTVTGDESEVEAFDDRYADLVTTDGGDVVDDLRAAMPDVALRNFPAMDRQHLEGGLVGFLSYDAVYDLWLDEVGLDRPDSRFPDAQFVLTTSTVRFDHVEDTVSLVFTPVVRQGEDAGERYGELVAEAERVEAVLSDLSPLSTGGFRREDEVAGPRDEYEDAVERAKEYVLSGDIYQGVISRTRELYGDVDPLGFYEALRAVNPSPYMYLLGYDDLTIVGASPETLVSVAGDHVVSNPIAGTCPRGNSPVEDRRLAGEMLADGKERAEHTMLVDLARNDVRRVAEAGSVRVPEFMNVLKYSHVQHIESTVTGRLAEDKDAFDAARATFPAGTLSGAPKIRAMEIIDELERSPRGPYGGGVGYFDWDGDTDFAIVIRSATVEDEGDRDRITVQAGAGIVADSDPESEYVETEQKMDGVLTALEEIEGEPVDVAERAAGHEEVTR.

L-tryptophan is bound by residues Ser59 and 299–301 (PYM). 334-335 (GT) lines the chorismate pocket. Residue Glu361 participates in Mg(2+) binding. Chorismate-binding positions include Tyr449, Arg469, 487-489 (GAG), and Gly489. Glu502 contacts Mg(2+).

Belongs to the anthranilate synthase component I family. In terms of assembly, tetramer of two components I and two components II. Requires Mg(2+) as cofactor.

It carries out the reaction chorismate + L-glutamine = anthranilate + pyruvate + L-glutamate + H(+). It functions in the pathway amino-acid biosynthesis; L-tryptophan biosynthesis; L-tryptophan from chorismate: step 1/5. The chain is Anthranilate synthase component 1 2 (trpE2) from Haloarcula marismortui (strain ATCC 43049 / DSM 3752 / JCM 8966 / VKM B-1809) (Halobacterium marismortui).